A 702-amino-acid chain; its full sequence is Polyribonucleotide nucleotidyltransferase (702 aa).

2 residues coordinate Mg(2+): aspartate 485 and aspartate 491. The KH domain occupies proline 552 to isoleucine 611. Positions glycine 621–lysine 689 constitute an S1 motif domain.

It belongs to the polyribonucleotide nucleotidyltransferase family. Requires Mg(2+) as cofactor.

It is found in the cytoplasm. The enzyme catalyses RNA(n+1) + phosphate = RNA(n) + a ribonucleoside 5'-diphosphate. Functionally, involved in mRNA degradation. Catalyzes the phosphorolysis of single-stranded polyribonucleotides processively in the 3'- to 5'-direction. This chain is Polyribonucleotide nucleotidyltransferase, found in Clostridium perfringens (strain SM101 / Type A).